The following is a 376-amino-acid chain: MAELFNFEMTATDGKARTGVIHTPRGEIRTPAFMPVGTAATVKAMMPESVRATGADILLGNTYHLMLRPTAERIDRLGGLHKFMNWDRPILTDSGGFQVMSLAGLRKLTEKGVTFKSHIDGSRHELTPERSMEIQRLLGSDIVMCFDECPALPADRDRIAESMRLSMRWAERSREAFGDRPGHALFGIQQGGLEQDFREESAEALTKIGFDGYAVGGLAVGEGQEAMFGCLDYAPDMLPVDKPRYLMGVGKPDDIVGAVSRGIDMMDCVLPSRSGRTGQAFTRHGVVNIKNARHQDDPRPLDENCSCPACSNYSRAYLHHVFRSNEMISGMLLTWHNLHYFQDIMAGMRESIAAGTFEAWQKTFHETRAQGDIEPL.

Residue aspartate 93 is the Proton acceptor of the active site. Residues 93–97 (DSGGF), aspartate 147, glutamine 190, and glycine 217 contribute to the substrate site. The segment at 248–254 (GVGKPDD) is RNA binding. Catalysis depends on aspartate 267, which acts as the Nucleophile. The Zn(2+) site is built by cysteine 305, cysteine 307, cysteine 310, and histidine 336.

This sequence belongs to the queuine tRNA-ribosyltransferase family. Homodimer. Within each dimer, one monomer is responsible for RNA recognition and catalysis, while the other monomer binds to the replacement base PreQ1. Requires Zn(2+) as cofactor.

The catalysed reaction is 7-aminomethyl-7-carbaguanine + guanosine(34) in tRNA = 7-aminomethyl-7-carbaguanosine(34) in tRNA + guanine. The protein operates within tRNA modification; tRNA-queuosine biosynthesis. Its function is as follows. Catalyzes the base-exchange of a guanine (G) residue with the queuine precursor 7-aminomethyl-7-deazaguanine (PreQ1) at position 34 (anticodon wobble position) in tRNAs with GU(N) anticodons (tRNA-Asp, -Asn, -His and -Tyr). Catalysis occurs through a double-displacement mechanism. The nucleophile active site attacks the C1' of nucleotide 34 to detach the guanine base from the RNA, forming a covalent enzyme-RNA intermediate. The proton acceptor active site deprotonates the incoming PreQ1, allowing a nucleophilic attack on the C1' of the ribose to form the product. After dissociation, two additional enzymatic reactions on the tRNA convert PreQ1 to queuine (Q), resulting in the hypermodified nucleoside queuosine (7-(((4,5-cis-dihydroxy-2-cyclopenten-1-yl)amino)methyl)-7-deazaguanosine). This Ruegeria sp. (strain TM1040) (Silicibacter sp.) protein is Queuine tRNA-ribosyltransferase.